Consider the following 247-residue polypeptide: Tyrosine recombinase XerD-like (247 aa).

Residues 1-72 (MIKHIEAFLA…TVNQFLHYLY (72 aa)) enclose the Core-binding (CB) domain. The region spanning 91–247 (STKVPFTYQL…PITLEKYYRL (157 aa)) is the Tyr recombinase domain. Residue Arg212 is part of the active site. Catalysis depends on Tyr244, which acts as the O-(3'-phospho-DNA)-tyrosine intermediate.

This sequence belongs to the 'phage' integrase family. XerD-like subfamily.

Its subcellular location is the cytoplasm. Its function is as follows. Putative tyrosine recombinase. Not involved in the cutting and rejoining of the recombining DNA molecules on dif(SL) site. This is Tyrosine recombinase XerD-like from Streptococcus uberis (strain ATCC BAA-854 / 0140J).